Reading from the N-terminus, the 213-residue chain is Phosphoenolpyruvate guanylyltransferase (213 aa).

Residues Thr146, Gly161, and Ser164 each contribute to the phosphoenolpyruvate site.

Belongs to the CofC family.

The enzyme catalyses phosphoenolpyruvate + GTP + H(+) = enolpyruvoyl-2-diphospho-5'-guanosine + diphosphate. The protein operates within cofactor biosynthesis; coenzyme F420 biosynthesis. In terms of biological role, guanylyltransferase that catalyzes the activation of phosphoenolpyruvate (PEP) as enolpyruvoyl-2-diphospho-5'-guanosine, via the condensation of PEP with GTP. It is involved in the biosynthesis of coenzyme F420, a hydride carrier cofactor. The sequence is that of Phosphoenolpyruvate guanylyltransferase from Mycolicibacterium vanbaalenii (strain DSM 7251 / JCM 13017 / BCRC 16820 / KCTC 9966 / NRRL B-24157 / PYR-1) (Mycobacterium vanbaalenii).